A 505-amino-acid polypeptide reads, in one-letter code: Maturase K (505 aa).

This sequence belongs to the intron maturase 2 family. MatK subfamily.

Its subcellular location is the plastid. The protein resides in the chloroplast. Functionally, usually encoded in the trnK tRNA gene intron. Probably assists in splicing its own and other chloroplast group II introns. This is Maturase K from Rhizophora stylosa (Bakau).